We begin with the raw amino-acid sequence, 776 residues long: Venom dipeptidyl peptidase 4 (776 aa).

Positions 1–19 are cleaved as a signal peptide; it reads MVPLRSFVLLNGLFFVLLA. N-linked (GlcNAc...) asparagine glycans are attached at residues N44, N66, and N329. Intrachain disulfides connect C449/C452 and C462/C480. Residues N504 and N577 are each glycosylated (N-linked (GlcNAc...) asparagine). S638 functions as the Charge relay system in the catalytic mechanism. An intrachain disulfide couples C658 to C769. A glycan (N-linked (GlcNAc...) asparagine) is linked at N693. Catalysis depends on charge relay system residues D717 and H749.

Belongs to the peptidase S9B family. DPPIV subfamily. In terms of tissue distribution, expressed by the venom gland.

Its subcellular location is the secreted. It carries out the reaction Release of an N-terminal dipeptide, Xaa-Yaa-|-Zaa-, from a polypeptide, preferentially when Yaa is Pro, provided Zaa is neither Pro nor hydroxyproline.. Functionally, venom dipeptidyl-peptidase which removes N-terminal dipeptides sequentially from polypeptides having unsubstituted N-termini provided that the penultimate residue is proline. May process venom proteins into their active forms and/or modulate the chemotactic activity of immune cells after the insect sting. The polypeptide is Venom dipeptidyl peptidase 4 (Vespa velutina (Asian yellow-legged hornet)).